Here is a 93-residue protein sequence, read N- to C-terminus: UPF0728 protein C10orf53 homolog (93 aa).

The protein belongs to the UPF0728 family.

The chain is UPF0728 protein C10orf53 homolog from Xenopus tropicalis (Western clawed frog).